The following is a 113-amino-acid chain: Large ribosomal subunit protein bL19 (113 aa).

Belongs to the bacterial ribosomal protein bL19 family.

In terms of biological role, this protein is located at the 30S-50S ribosomal subunit interface and may play a role in the structure and function of the aminoacyl-tRNA binding site. This Nocardia farcinica (strain IFM 10152) protein is Large ribosomal subunit protein bL19.